The sequence spans 505 residues: Pleckstrin homology domain-containing family D member 1 (505 aa).

The PH domain occupies 28–136 (KVQLYGVLWK…WLEMLQESGK (109 aa)). Residues 146–391 (EAMIKSLEAQ…KVRNKEKEER (246 aa)) adopt a coiled-coil conformation. The disordered stretch occupies residues 264–284 (DKNQPQPLTNQSEQPPASDGL). Polar residues predominate over residues 267 to 278 (QPQPLTNQSEQP). Arg-502 is modified (omega-N-methylarginine).

Belongs to the PLEKHD1 family.

The chain is Pleckstrin homology domain-containing family D member 1 (Plekhd1) from Mus musculus (Mouse).